A 458-amino-acid chain; its full sequence is Bifunctional protein GlmU (458 aa).

Residues 1–230 (MLQVDVVILA…DWEVSGVNDK (230 aa)) form a pyrophosphorylase region. UDP-N-acetyl-alpha-D-glucosamine is bound by residues 9 to 12 (LAAG), K23, Q75, and 80 to 81 (GT). D104 contacts Mg(2+). Residues G139, E155, N170, and N228 each coordinate UDP-N-acetyl-alpha-D-glucosamine. Residue N228 participates in Mg(2+) binding. Residues 231–251 (IQLSILERAHQQDTANRLMEQ) form a linker region. Residues 252–458 (GVMFADPARF…NWKRPRKDRN (207 aa)) are N-acetyltransferase. Positions 334 and 352 each coordinate UDP-N-acetyl-alpha-D-glucosamine. H364 acts as the Proton acceptor in catalysis. Positions 367 and 378 each coordinate UDP-N-acetyl-alpha-D-glucosamine. Acetyl-CoA contacts are provided by residues A381, 387-388 (NY), S406, A424, and R441.

In the N-terminal section; belongs to the N-acetylglucosamine-1-phosphate uridyltransferase family. This sequence in the C-terminal section; belongs to the transferase hexapeptide repeat family. In terms of assembly, homotrimer. Mg(2+) serves as cofactor.

The protein resides in the cytoplasm. It catalyses the reaction alpha-D-glucosamine 1-phosphate + acetyl-CoA = N-acetyl-alpha-D-glucosamine 1-phosphate + CoA + H(+). It carries out the reaction N-acetyl-alpha-D-glucosamine 1-phosphate + UTP + H(+) = UDP-N-acetyl-alpha-D-glucosamine + diphosphate. Its pathway is nucleotide-sugar biosynthesis; UDP-N-acetyl-alpha-D-glucosamine biosynthesis; N-acetyl-alpha-D-glucosamine 1-phosphate from alpha-D-glucosamine 6-phosphate (route II): step 2/2. It participates in nucleotide-sugar biosynthesis; UDP-N-acetyl-alpha-D-glucosamine biosynthesis; UDP-N-acetyl-alpha-D-glucosamine from N-acetyl-alpha-D-glucosamine 1-phosphate: step 1/1. It functions in the pathway bacterial outer membrane biogenesis; LPS lipid A biosynthesis. Catalyzes the last two sequential reactions in the de novo biosynthetic pathway for UDP-N-acetylglucosamine (UDP-GlcNAc). The C-terminal domain catalyzes the transfer of acetyl group from acetyl coenzyme A to glucosamine-1-phosphate (GlcN-1-P) to produce N-acetylglucosamine-1-phosphate (GlcNAc-1-P), which is converted into UDP-GlcNAc by the transfer of uridine 5-monophosphate (from uridine 5-triphosphate), a reaction catalyzed by the N-terminal domain. This chain is Bifunctional protein GlmU, found in Nitrosomonas europaea (strain ATCC 19718 / CIP 103999 / KCTC 2705 / NBRC 14298).